We begin with the raw amino-acid sequence, 816 residues long: MAMWQGAMDNRGFHQGSFSSFQSSSSDEDLMDIPGTAMDFSMRDDVPPLDREIEGNKSYNGGGIGSSNRVMDFLEEPIPGVGTYDDFNTIDWVREKSRDRDRHREITNKSKESTWALIHSVSDAFSGWLLMLLIGLLSGSLAGLIDISAHWMTDLKEGICTGGFWFNHEHCCWNSEHVTFEHRDKCPEWNSWAQLIINTDQGAFAYIVNYFMYVLWALLFAFLAVSLVKAFAPYACGSGIPEIKTILSGFIIRGYLGKWTLVIKTITLVLAVSSGLSLGKEGPLVHVACCCGNILCHCFNKYRKNEAKRREVLSAAAAAGVSVAFGAPIGGVLFSLEEVSYYFPLKTLWRSFFAALVAAFTLRSINPFGNSRLVLFYVEFHTPWHLFELVPFIVLGIFGGLWGALFIRTNIAWCRKRKTTQLGKYPVVEVLIVTAITAILAFPNEYTRMSTSELISELFNDCGLLDSSKLCDYENHFNTSKGGELPDRPAGVGIYSAMWQLALTLILKIVITIFTFGMKIPSGLFIPSMAVGAIAGRLLGVGMEQLAYYHHDWGIFNSWCSQGADCITPGLYAMVGAAACLGGVTRMTVSLVVIMFELTGGLEYIVPLMAAAMTSKWVADALGREGIYDAHIRLNGYPFLEAKEEFAHKTLAMDVMKPRRNDPLLTVLTQDSMTVEDVETIISETTYSGFPVVVSRESQRLVGFVLRRDLIISIENARKKQDGVVSTSIIYFTEHSPPMPPYTPPTLKLRNILDLSPFTVTDLTPMEIVVDIFRKLGLRQCLVTHNGRLLGIITKKDVLKHIAQMANQDPDSILFN.

Residues 1–124 (MAMWQGAMDN…WALIHSVSDA (124 aa)) lie on the Cytoplasmic side of the membrane. Transmembrane regions (helical) follow at residues 125-162 (FSGW…ICTG) and 208-231 (VNYF…VKAF). Positions 237–241 (GSGIP) match the Selectivity filter part_1 motif. Serine 238 is a chloride binding site. Residues 240–247 (IPEIKTIL) constitute an intramembrane region (helical). Transmembrane regions (helical) follow at residues 256–275 (LGKW…VSSG) and 281–300 (EGPL…HCFN). The short motif at 279-283 (GKEGP) is the Selectivity filter part_2 element. Intramembrane regions (helical) lie at residues 312–324 (VLSA…VSVA) and 328–336 (PIGGVLFSL). The next 5 helical transmembrane spans lie at 348–366 (LWRS…RSIN), 389–414 (LVPF…IAWC), 422–442 (LGKY…ILAF), 498–518 (MWQL…TFGM), and 523–542 (GLFI…LGVG). Residues 523–527 (GLFIP) carry the Selectivity filter part_3 motif. Phenylalanine 525 is a binding site for chloride. Positions 570-584 (GLYAMVGAAACLGGV) form an intramembrane region, helical. Positions 585–587 (TRM) form an intramembrane region, note=Loop between two helices. The helical intramembrane region spans 588–599 (TVSLVVIMFELT). Residues 600–604 (GGLEY) constitute an intramembrane region (note=Loop between two helices). The chain crosses the membrane as a helical span at residues 605–622 (IVPLMAAAMTSKWVADAL). Residues 623–816 (GREGIYDAHI…NQDPDSILFN (194 aa)) are Cytoplasmic-facing. Position 628 (tyrosine 628) interacts with chloride. 2 consecutive CBS domains span residues 656–720 (MKPR…ARKK) and 752–812 (ILDL…DPDS). ATP is bound by residues threonine 666, 687–689 (YSG), and 794–797 (TKKD).

Belongs to the chloride channel (TC 2.A.49) family. ClC-5/CLCN5 subfamily. In terms of assembly, interacts with NEDD4 and NEDD4L. In terms of processing, ubiquitinated by NEDD4L in the presence of albumin; which promotes endocytosis and proteasomal degradation. In terms of tissue distribution, kidney specific.

The protein resides in the golgi apparatus membrane. It localises to the endosome membrane. The protein localises to the cell membrane. It catalyses the reaction 2 chloride(in) + H(+)(out) = 2 chloride(out) + H(+)(in). Proton-coupled chloride transporter. Functions as antiport system and exchanges chloride ions against protons. Important for normal acidification of the endosome lumen. May play an important role in renal tubular function. The CLC channel family contains both chloride channels and proton-coupled anion transporters that exchange chloride or another anion for protons. The absence of conserved gating glutamate residues is typical for family members that function as channels. The sequence is that of H(+)/Cl(-) exchange transporter 5 (Clcn5) from Mus musculus (Mouse).